The chain runs to 983 residues: Pro-apoptotic serine protease NMA111 (983 aa).

The interval 1 to 40 (MSVPTKRRLSFDESTNKRFLNGTHSTENNTSNIEVDEDYG) is disordered. A compositionally biased stretch (polar residues) spans 22 to 33 (GTHSTENNTSNI). The interval 59–260 (WQETITKVVN…LPIYRPLRAL (202 aa)) is serine protease. Residues His108, Asp139, and Ser222 each act as charge relay system in the active site. PDZ domains are found at residues 287–365 (RRLG…QRGG) and 867–948 (FWSG…MSFD).

Belongs to the peptidase S1C family.

It is found in the nucleus. Its function is as follows. Nuclear serine protease which mediates apoptosis. The chain is Pro-apoptotic serine protease NMA111 (NMA111) from Scheffersomyces stipitis (strain ATCC 58785 / CBS 6054 / NBRC 10063 / NRRL Y-11545) (Yeast).